The following is a 103-amino-acid chain: Phosphoribosyl-ATP pyrophosphatase (103 aa).

It belongs to the PRA-PH family.

The protein localises to the cytoplasm. It carries out the reaction 1-(5-phospho-beta-D-ribosyl)-ATP + H2O = 1-(5-phospho-beta-D-ribosyl)-5'-AMP + diphosphate + H(+). It participates in amino-acid biosynthesis; L-histidine biosynthesis; L-histidine from 5-phospho-alpha-D-ribose 1-diphosphate: step 2/9. The sequence is that of Phosphoribosyl-ATP pyrophosphatase from Cereibacter sphaeroides (strain ATCC 17025 / ATH 2.4.3) (Rhodobacter sphaeroides).